The chain runs to 474 residues: tRNA-2-methylthio-N(6)-dimethylallyladenosine synthase (474 aa).

Residues 3-120 (KKLLIKTWGC…LPEMIKQSQT (118 aa)) form the MTTase N-terminal domain. 6 residues coordinate [4Fe-4S] cluster: Cys-12, Cys-49, Cys-83, Cys-157, Cys-161, and Cys-164. The Radical SAM core domain occupies 143–375 (RAEGATAFVS…QQTINAQAMR (233 aa)). Positions 378–441 (RLMLATEQRV…ANSLRGELVR (64 aa)) constitute a TRAM domain.

Belongs to the methylthiotransferase family. MiaB subfamily. Monomer. It depends on [4Fe-4S] cluster as a cofactor.

It localises to the cytoplasm. The catalysed reaction is N(6)-dimethylallyladenosine(37) in tRNA + (sulfur carrier)-SH + AH2 + 2 S-adenosyl-L-methionine = 2-methylsulfanyl-N(6)-dimethylallyladenosine(37) in tRNA + (sulfur carrier)-H + 5'-deoxyadenosine + L-methionine + A + S-adenosyl-L-homocysteine + 2 H(+). Its function is as follows. Catalyzes the methylthiolation of N6-(dimethylallyl)adenosine (i(6)A), leading to the formation of 2-methylthio-N6-(dimethylallyl)adenosine (ms(2)i(6)A) at position 37 in tRNAs that read codons beginning with uridine. This chain is tRNA-2-methylthio-N(6)-dimethylallyladenosine synthase, found in Vibrio parahaemolyticus serotype O3:K6 (strain RIMD 2210633).